The chain runs to 483 residues: Cobyric acid synthase (483 aa).

In terms of domain architecture, GATase cobBQ-type spans 248-435 (LLKVVVPVLP…LHGLFETPAA (188 aa)). The Nucleophile role is filled by cysteine 329. The active site involves histidine 427.

The protein belongs to the CobB/CobQ family. CobQ subfamily.

It functions in the pathway cofactor biosynthesis; adenosylcobalamin biosynthesis. In terms of biological role, catalyzes amidations at positions B, D, E, and G on adenosylcobyrinic A,C-diamide. NH(2) groups are provided by glutamine, and one molecule of ATP is hydrogenolyzed for each amidation. This Pseudomonas fluorescens (strain ATCC BAA-477 / NRRL B-23932 / Pf-5) protein is Cobyric acid synthase.